A 148-amino-acid polypeptide reads, in one-letter code: uncharacterized protein (148 aa).

The span at 65–79 (VDSTPSVDSTGSTSD) shows a compositional bias: low complexity. The tract at residues 65-85 (VDSTPSVDSTGSTSDVVDDRG) is disordered.

This is an uncharacterized protein from Saccharomyces cerevisiae (strain ATCC 204508 / S288c) (Baker's yeast).